We begin with the raw amino-acid sequence, 326 residues long: Tetraacyldisaccharide 4'-kinase (326 aa).

55–62 (TAGGNGKT) contributes to the ATP binding site.

This sequence belongs to the LpxK family.

The catalysed reaction is a lipid A disaccharide + ATP = a lipid IVA + ADP + H(+). The protein operates within glycolipid biosynthesis; lipid IV(A) biosynthesis; lipid IV(A) from (3R)-3-hydroxytetradecanoyl-[acyl-carrier-protein] and UDP-N-acetyl-alpha-D-glucosamine: step 6/6. In terms of biological role, transfers the gamma-phosphate of ATP to the 4'-position of a tetraacyldisaccharide 1-phosphate intermediate (termed DS-1-P) to form tetraacyldisaccharide 1,4'-bis-phosphate (lipid IVA). The chain is Tetraacyldisaccharide 4'-kinase from Serratia proteamaculans (strain 568).